The chain runs to 366 residues: 3-isopropylmalate dehydrogenase (366 aa).

77 to 90 (GPKWDDNPPHLRPE) provides a ligand contact to NAD(+). Substrate contacts are provided by Arg-97, Arg-107, Arg-135, and Asp-223. The Mg(2+) site is built by Asp-223, Asp-246, and Asp-250. An NAD(+)-binding site is contributed by 280–292 (GSAPDIAGMNKAN).

It belongs to the isocitrate and isopropylmalate dehydrogenases family. LeuB type 1 subfamily. As to quaternary structure, homodimer. Mg(2+) is required as a cofactor. It depends on Mn(2+) as a cofactor.

The protein localises to the cytoplasm. It carries out the reaction (2R,3S)-3-isopropylmalate + NAD(+) = 4-methyl-2-oxopentanoate + CO2 + NADH. It functions in the pathway amino-acid biosynthesis; L-leucine biosynthesis; L-leucine from 3-methyl-2-oxobutanoate: step 3/4. Catalyzes the oxidation of 3-carboxy-2-hydroxy-4-methylpentanoate (3-isopropylmalate) to 3-carboxy-4-methyl-2-oxopentanoate. The product decarboxylates to 4-methyl-2 oxopentanoate. The polypeptide is 3-isopropylmalate dehydrogenase (leuB) (Bacillus caldotenax).